Consider the following 757-residue polypeptide: MDVNPTLLFLKVPAQNAISTTFPYTGDPPYSHGTGTGYTMDTVNRTHQYSERGKWTINTETGAPQLNPIDGPLPEDNEPTGYAQTDCVLEAMAFLEKSHPGIFENSCLETMEVIQQTRVDKLTQGRQTFDWTLNRNQPAATALANTIEVFRLNGLTTSESGRLIDFLKDVMESMDKEEMEIVTHFQRKRRVRDNMTKKMVTQRTIGKKKQKLNKRGYLIRALTLNTMTKDAERGKLKRRAIATPGMQIRGFVYFVETLARSICEKLEQSGLPVGGNEKKAKLANVVRKMMTNSQDTELSFTITGDNTKWNENQNPRMFLAMITYITRNQPEWFRNVLSVAPIMFSNKMARLGKGYMFESKNMKLRTQIPAEMLSGIDLRYFNDSTRKKIEKIRPLLIEGAASLSPGMMMGMFNMLSTVLGVSILNLGQKEYTKTAYWWDGLQSSDDFALIVNAPNHEGIQAGVDRFYRTCKLLGINMSKKKSYINRTGTFEFTSFFYRYGFVANFSMELPSFGVSGINESADMSIGVTVIKNNMINNDLGPATAQMALQLFIKDYRYTYRCHRGDTQIQTRRSFEIKKLWDQTRSKAGLLVSDGGPNLYNIRNLHIPEVCLKWELMDKDYQGRLCNPLNPFVSHKEIESVNNAVVMPSHGPAKTMEYDAVATTHSWVPKRNRSILNTSQRGILEDEQMYQKCCNLFEKFFPSSSYRRPVGISSMVEAMVSRARIDARIDFESGRIKKEDFAEIMKICSTIEDLRRQK.

2 short sequence motifs (nuclear localization signal) span residues 187 to 195 (RKRRVRDNM) and 203 to 216 (RTIG…NKRG). Positions 249–256 (RGFVYFVE) are promoter-binding site. Residues 286-483 (VRKMMTNSQD…GINMSKKKSY (198 aa)) form the RdRp catalytic domain.

Belongs to the influenza viruses polymerase PB1 family. In terms of assembly, influenza RNA polymerase is composed of three subunits: PB1, PB2 and PA. Interacts (via N-terminus) with PA (via C-terminus). Interacts (via C-terminus) with PB2 (via N-terminus); this interaction is essential for transcription initiation. Interacts (via C-terminus) with human PKP2 (via N-terminus); the interaction competitively inhibits the interaction between the RNA polymerase subunits PB1 and PB2. In terms of processing, phosphorylated by host PRKCA.

Its subcellular location is the host nucleus. It localises to the host cytoplasm. The enzyme catalyses RNA(n) + a ribonucleoside 5'-triphosphate = RNA(n+1) + diphosphate. Its function is as follows. RNA-dependent RNA polymerase which is responsible for replication and transcription of virus RNA segments. The transcription of viral mRNAs occurs by a unique mechanism called cap-snatching. 5' methylated caps of cellular mRNAs are cleaved after 10-13 nucleotides by PA. In turn, these short capped RNAs are used as primers by PB1 for transcription of viral mRNAs. During virus replication, PB1 initiates RNA synthesis and copy vRNA into complementary RNA (cRNA) which in turn serves as a template for the production of more vRNAs. The sequence is that of RNA-directed RNA polymerase catalytic subunit from Influenza A virus (strain A/Swine/Ontario/2/1981 H1N1).